Consider the following 37-residue polypeptide: Large ribosomal subunit protein bL36 (37 aa).

Belongs to the bacterial ribosomal protein bL36 family.

This is Large ribosomal subunit protein bL36 from Desulfotalea psychrophila (strain LSv54 / DSM 12343).